The primary structure comprises 394 residues: 1-deoxy-D-xylulose 5-phosphate reductoisomerase (394 aa).

Residues T13, G14, S15, I16, and N127 each coordinate NADPH. K128 contributes to the 1-deoxy-D-xylulose 5-phosphate binding site. Position 129 (E129) interacts with NADPH. Residue D153 participates in Mn(2+) binding. Residues S154, E155, S184, and H207 each coordinate 1-deoxy-D-xylulose 5-phosphate. Residue E155 participates in Mn(2+) binding. G213 serves as a coordination point for NADPH. Residues S220, N225, K226, and E229 each contribute to the 1-deoxy-D-xylulose 5-phosphate site. E229 contributes to the Mn(2+) binding site.

It belongs to the DXR family. The cofactor is Mg(2+). Mn(2+) serves as cofactor.

It carries out the reaction 2-C-methyl-D-erythritol 4-phosphate + NADP(+) = 1-deoxy-D-xylulose 5-phosphate + NADPH + H(+). Its pathway is isoprenoid biosynthesis; isopentenyl diphosphate biosynthesis via DXP pathway; isopentenyl diphosphate from 1-deoxy-D-xylulose 5-phosphate: step 1/6. Functionally, catalyzes the NADPH-dependent rearrangement and reduction of 1-deoxy-D-xylulose-5-phosphate (DXP) to 2-C-methyl-D-erythritol 4-phosphate (MEP). The polypeptide is 1-deoxy-D-xylulose 5-phosphate reductoisomerase (Ectopseudomonas mendocina (strain ymp) (Pseudomonas mendocina)).